The chain runs to 230 residues: Orotidine 5'-phosphate decarboxylase (230 aa).

Substrate contacts are provided by residues aspartate 16, lysine 38, aspartate 65–threonine 74, threonine 119, arginine 180, glutamine 189, glycine 209, and arginine 210. The active-site Proton donor is the lysine 67.

Belongs to the OMP decarboxylase family. Type 1 subfamily. As to quaternary structure, homodimer.

The catalysed reaction is orotidine 5'-phosphate + H(+) = UMP + CO2. Its pathway is pyrimidine metabolism; UMP biosynthesis via de novo pathway; UMP from orotate: step 2/2. Catalyzes the decarboxylation of orotidine 5'-monophosphate (OMP) to uridine 5'-monophosphate (UMP). In Methylobacterium radiotolerans (strain ATCC 27329 / DSM 1819 / JCM 2831 / NBRC 15690 / NCIMB 10815 / 0-1), this protein is Orotidine 5'-phosphate decarboxylase.